We begin with the raw amino-acid sequence, 802 residues long: Cell division cycle 5-like protein (802 aa).

HTH myb-type domains lie at 1–56 and 57–108; these read MPRI…WLDP and SIKK…DKAA. 2 DNA-binding regions (H-T-H motif) span residues 31-54 and 82-104; these read WSRI…YEWL and WRTI…EFLL. The segment at 108–143 is disordered; that stretch reads AQRDNEEETTDDPRKLKPGEIDPNPETKPARPDPID. Over residues 118–127 the composition is skewed to basic and acidic residues; it reads DDPRKLKPGE. Lys135 participates in a covalent cross-link: Glycyl lysine isopeptide (Lys-Gly) (interchain with G-Cter in SUMO2). Residues 142 to 245 adopt a coiled-coil conformation; that stretch reads IDMDEDELEM…DADFRKLRQQ (104 aa). The Nuclear localization signal motif lies at 165–271; that stretch reads KKAKRKAREK…KDKQHLKRKK (107 aa). Residues 200-206 form a required for interaction with CTNNBL1 region; sequence KKRKKKR. Lys219 participates in a covalent cross-link: Glycyl lysine isopeptide (Lys-Gly) (interchain with G-Cter in SUMO2). Thr227 bears the Phosphothreonine mark. Residues 246 to 262 show a composition bias toward basic and acidic residues; the sequence is DLDGELRSEKEGRDRKK. A disordered region spans residues 246–278; that stretch reads DLDGELRSEKEGRDRKKDKQHLKRKKESDLPSA. Positions 260–606 are interaction with PPP1R8; that stretch reads RKKDKQHLKR…NKKGKTVGFG (347 aa). Phosphoserine is present on residues Ser303 and Ser358. 6 positions are modified to phosphothreonine: Thr377, Thr385, Thr396, Thr404, Thr411, and Thr415. Positions 409–418 are enriched in polar residues; it reads LSTPFRTPSH. The interval 409-459 is disordered; that stretch reads LSTPFRTPSHGSEGLTPRSGTTPKPVINSTPGRTPLRDKLNINPEDGMADY. The residue at position 417 (Ser417) is a Phosphoserine. Phosphothreonine occurs at positions 424 and 430. Over residues 426 to 440 the composition is skewed to polar residues; sequence RSGTTPKPVINSTPG. Ser437 is subject to Phosphoserine. Phosphothreonine is present on residues Thr438 and Thr442. Lys487 participates in a covalent cross-link: Glycyl lysine isopeptide (Lys-Gly) (interchain with G-Cter in SUMO2). The interaction with DAPK3 stretch occupies residues 501-659; it reads ELEEREIDDT…GELSSEAYNQ (159 aa). 2 coiled-coil regions span residues 676 to 701 and 764 to 802; these read RYTR…INRG and PRRL…KAKF. The interval 706 to 800 is interaction with PLRG1; it reads EAKRAAKMEK…LLLEKETLKA (95 aa).

The protein belongs to the CEF1 family. Homodimer. Interacts with DAPK3. Component of the precatalytic, catalytic and postcatalytic spliceosome complexes. Part of a spliceosomal 'core' complex consisting of CDC5L, PLRG1, SPF27, CCAP1, CCAP3 and CCAP6. Interacts with PLRG1, Lodestar/TTF2, and NIPP1/PPP1R8. Component of the minor spliceosome, which splices U12-type introns. Within this complex, interacts with SCNM1. Component of the PRP19-CDC5L splicing complex composed of a core complex comprising a homotetramer of PRPF19, CDC5L, PLRG1 and BCAS2, and at least three less stably associated proteins CTNNBL1, CWC15 and HSPA8. Interacts (via its C-terminus) directly in the complex with PRPF19 and BCAS2. Interacts (via its C-terminus) directly with PRGL1 (via its WD40 repeat domain); the interaction is required for mRNA splicing but not for spliceosome assembly. Also interacts with CTNNBL1. Interacts with PRPF19 (via N-terminus). Interacts with USB1. Interacts with DDX41. In terms of processing, phosphorylated on serine and threonine residues. Phosphorylation on Thr-411 and Thr-438 is required for CDC5L-mediated mRNA splicing. Has no effect on subcellular location nor on homodimerization. Phosphorylated in vitro by CDK2. Phosphorylation enhances interaction with PPP1R8.

The protein localises to the nucleus. It is found in the nucleus speckle. It localises to the cytoplasm. In terms of biological role, DNA-binding protein involved in cell cycle control. May act as a transcription activator. Plays a role in pre-mRNA splicing as core component of precatalytic, catalytic and postcatalytic spliceosomal complexes. Component of the PRP19-CDC5L complex that forms an integral part of the spliceosome and is required for activating pre-mRNA splicing. The PRP19-CDC5L complex may also play a role in the response to DNA damage (DDR). As a component of the minor spliceosome, involved in the splicing of U12-type introns in pre-mRNAs. This chain is Cell division cycle 5-like protein (CDC5L), found in Bos taurus (Bovine).